The following is a 143-amino-acid chain: Mediator of RNA polymerase II transcription subunit 10 (143 aa).

A disordered region spans residues 123 to 143; the sequence is GAHSNTEISTNPGQKRQGNVS. Residues 124–143 show a composition bias toward polar residues; sequence AHSNTEISTNPGQKRQGNVS.

Belongs to the Mediator complex subunit 10 family. Component of the Mediator complex.

Its subcellular location is the nucleus. Component of the Mediator complex, a coactivator involved in the regulated transcription of nearly all RNA polymerase II-dependent genes. Mediator functions as a bridge to convey information from gene-specific regulatory proteins to the basal RNA polymerase II transcription machinery. Mediator is recruited to promoters by direct interactions with regulatory proteins and serves as a scaffold for the assembly of a functional preinitiation complex with RNA polymerase II and the general transcription factors. In Yarrowia lipolytica (strain CLIB 122 / E 150) (Yeast), this protein is Mediator of RNA polymerase II transcription subunit 10 (NUT2).